We begin with the raw amino-acid sequence, 208 residues long: Ras-related protein RABH1b (208 aa).

16–23 lines the GTP pocket; sequence GDQSVGKT. Positions 38–46 match the Effector region motif; the sequence is YQATIGIDF. Residues 64-68, 122-125, and 152-153 each bind GTP; these read DTAGQ, NKTD, and SA. 2 S-geranylgeranyl cysteine lipidation sites follow: C206 and C208. C208 is modified (cysteine methyl ester).

It belongs to the small GTPase superfamily. Rab family. Interacts with the C-terminus of GC5, but not with GC3. Expressed in roots, stems, leaves and flowers.

The protein resides in the golgi apparatus membrane. Its subcellular location is the cytoplasm. It is found in the cytosol. In terms of biological role, protein transport. Regulator of membrane traffic from the Golgi apparatus towards the endoplasmic reticulum (ER). Binds GTP and GDP and possesses intrinsic GTPase activity. This is Ras-related protein RABH1b (RABH1B) from Arabidopsis thaliana (Mouse-ear cress).